The primary structure comprises 301 residues: MEILMYKRLPPLNSLKSFESAARYLSFTKAADELCVTQAAVSHQIKLLEXFLGIDLFKRKNRSLELTELGKAYFVDINKILRRLNEATERLLTLKTDPHLNISVPQTFGIQWLVPHLSEFNQLYPQIEVRLTGVDQDEGLLNKEIDLAIYYGLGNWQNLQVDRLCEENLLILASPELLAENPIIQPEDLKKHTLIHIHTCDNWQAMANHLQLDDLNIQQGPLFSHTFMALQAAIHGQGIVLANRLLALQEIENGSLQAVLPTNLPDPKSFYVVNHLDRLDDQKIQAFRQWIINSIKQEENE.

In terms of domain architecture, HTH lysR-type spans 10–67 (PPLNSLKSFESAARYLSFTKAADELCVTQAAVSHQIKLLEXFLGIDLFKRKNRSLELT). Residues 27 to 46 (FTKAADELCVTQAAVSHQIK) constitute a DNA-binding region (H-T-H motif).

It belongs to the LysR transcriptional regulatory family.

The protein resides in the cytoplasm. Its function is as follows. Not known, the gcv operon regulated by the E.coli homolog does not exist in H.influenzae, so it probably acts as a transcriptional regulator on some other operon. This chain is Glycine cleavage system transcriptional activator homolog (gcvA), found in Haemophilus influenzae (strain ATCC 51907 / DSM 11121 / KW20 / Rd).